The following is a 91-amino-acid chain: UPF0250 protein BB0170 (91 aa).

It belongs to the UPF0250 family.

This Bordetella bronchiseptica (strain ATCC BAA-588 / NCTC 13252 / RB50) (Alcaligenes bronchisepticus) protein is UPF0250 protein BB0170.